The following is a 456-amino-acid chain: Phosphomethylpyrimidine synthase (456 aa).

Substrate is bound by residues asparagine 80, methionine 109, tyrosine 139, histidine 175, 195–197, 236–239, and glutamate 275; these read SRG and DSLR. Residue histidine 279 participates in Zn(2+) binding. A substrate-binding site is contributed by tyrosine 302. Histidine 343 is a Zn(2+) binding site. Residues cysteine 423, cysteine 426, and cysteine 431 each coordinate [4Fe-4S] cluster.

It belongs to the ThiC family. The cofactor is [4Fe-4S] cluster.

It catalyses the reaction 5-amino-1-(5-phospho-beta-D-ribosyl)imidazole + S-adenosyl-L-methionine = 4-amino-2-methyl-5-(phosphooxymethyl)pyrimidine + CO + 5'-deoxyadenosine + formate + L-methionine + 3 H(+). Its pathway is cofactor biosynthesis; thiamine diphosphate biosynthesis. Its function is as follows. Catalyzes the synthesis of the hydroxymethylpyrimidine phosphate (HMP-P) moiety of thiamine from aminoimidazole ribotide (AIR) in a radical S-adenosyl-L-methionine (SAM)-dependent reaction. The sequence is that of Phosphomethylpyrimidine synthase from Prochlorococcus marinus (strain MIT 9312).